We begin with the raw amino-acid sequence, 306 residues long: Mycothiol acetyltransferase (306 aa).

2 N-acetyltransferase domains span residues Val-17–Pro-163 and Leu-166–Ala-306. Glu-48 is a 1D-myo-inositol 2-(L-cysteinylamino)-2-deoxy-alpha-D-glucopyranoside binding site. Ile-89 to Val-91 serves as a coordination point for acetyl-CoA. 1D-myo-inositol 2-(L-cysteinylamino)-2-deoxy-alpha-D-glucopyranoside is bound by residues Glu-192, Lys-232, and Glu-239. Acetyl-CoA-binding positions include Leu-243–Val-245 and Ala-250–Ser-256. Residue Tyr-277 participates in 1D-myo-inositol 2-(L-cysteinylamino)-2-deoxy-alpha-D-glucopyranoside binding.

It belongs to the acetyltransferase family. MshD subfamily. In terms of assembly, monomer.

The enzyme catalyses 1D-myo-inositol 2-(L-cysteinylamino)-2-deoxy-alpha-D-glucopyranoside + acetyl-CoA = mycothiol + CoA + H(+). In terms of biological role, catalyzes the transfer of acetyl from acetyl-CoA to desacetylmycothiol (Cys-GlcN-Ins) to form mycothiol. The polypeptide is Mycothiol acetyltransferase (Clavibacter michiganensis subsp. michiganensis (strain NCPPB 382)).